Consider the following 444-residue polypeptide: RAC family serine/threonine-protein kinase homolog (444 aa).

The 96-residue stretch at 5-100 folds into the PH domain; the sequence is PIKHEGFLTK…WIEILINERE (96 aa). One can recognise a Protein kinase domain in the interval 120–374; that stretch reads FELLNLVGKG…PNLIKRHPFF (255 aa). Residues 126–134 and lysine 149 each bind ATP; that span reads VGKGSFGKV. Aspartate 243 serves as the catalytic Proton acceptor. Position 278 is a phosphothreonine (threonine 278). An AGC-kinase C-terminal domain is found at 375–444; it reads RSIDWEQLFQ…TYVAESEHLR (70 aa).

The protein belongs to the protein kinase superfamily. AGC Ser/Thr protein kinase family. RAC subfamily.

It carries out the reaction L-seryl-[protein] + ATP = O-phospho-L-seryl-[protein] + ADP + H(+). It catalyses the reaction L-threonyl-[protein] + ATP = O-phospho-L-threonyl-[protein] + ADP + H(+). Predominantly involved during the aggregation to control cell polarity and chemotaxis. Phosphorylates talB, gefN, gefS, PI4P 5-kinase and gacQ. The polypeptide is RAC family serine/threonine-protein kinase homolog (pkbA) (Dictyostelium discoideum (Social amoeba)).